Consider the following 464-residue polypeptide: Cysteine--tRNA ligase 1 (464 aa).

Cys-28 provides a ligand contact to Zn(2+). The 'HIGH' region signature appears at 30 to 40; it reads VTIYDLCHIGH. Cys-209, His-234, and Glu-238 together coordinate Zn(2+). The short motif at 266–270 is the 'KMSKS' region element; the sequence is KMSKS. An ATP-binding site is contributed by Lys-269.

The protein belongs to the class-I aminoacyl-tRNA synthetase family. Monomer. Zn(2+) serves as cofactor.

Its subcellular location is the cytoplasm. The enzyme catalyses tRNA(Cys) + L-cysteine + ATP = L-cysteinyl-tRNA(Cys) + AMP + diphosphate. This chain is Cysteine--tRNA ligase 1, found in Photobacterium profundum (strain SS9).